Here is a 277-residue protein sequence, read N- to C-terminus: Energy-coupling factor transporter ATP-binding protein EcfA1 (277 aa).

One can recognise an ABC transporter domain in the interval 4–238 (IETKNLNYSY…SELLSKNDLK (235 aa)). 38–45 (GKNGSGKS) contributes to the ATP binding site.

Belongs to the ABC transporter superfamily. Energy-coupling factor EcfA family. As to quaternary structure, forms a stable energy-coupling factor (ECF) transporter complex composed of 2 membrane-embedded substrate-binding proteins (S component), 2 ATP-binding proteins (A component) and 2 transmembrane proteins (T component).

It localises to the cell membrane. In terms of biological role, ATP-binding (A) component of a common energy-coupling factor (ECF) ABC-transporter complex. Unlike classic ABC transporters this ECF transporter provides the energy necessary to transport a number of different substrates. The polypeptide is Energy-coupling factor transporter ATP-binding protein EcfA1 (Oenococcus oeni (strain ATCC BAA-331 / PSU-1)).